The primary structure comprises 349 residues: Nicotinate-nucleotide--dimethylbenzimidazole phosphoribosyltransferase (349 aa).

The active-site Proton acceptor is glutamate 316.

Belongs to the CobT family.

It catalyses the reaction 5,6-dimethylbenzimidazole + nicotinate beta-D-ribonucleotide = alpha-ribazole 5'-phosphate + nicotinate + H(+). It functions in the pathway nucleoside biosynthesis; alpha-ribazole biosynthesis; alpha-ribazole from 5,6-dimethylbenzimidazole: step 1/2. In terms of biological role, catalyzes the synthesis of alpha-ribazole-5'-phosphate from nicotinate mononucleotide (NAMN) and 5,6-dimethylbenzimidazole (DMB). The chain is Nicotinate-nucleotide--dimethylbenzimidazole phosphoribosyltransferase from Photorhabdus laumondii subsp. laumondii (strain DSM 15139 / CIP 105565 / TT01) (Photorhabdus luminescens subsp. laumondii).